Reading from the N-terminus, the 153-residue chain is UPF0260 protein Plav_0898 (153 aa).

Belongs to the UPF0260 family.

The sequence is that of UPF0260 protein Plav_0898 from Parvibaculum lavamentivorans (strain DS-1 / DSM 13023 / NCIMB 13966).